The primary structure comprises 563 residues: Ataxin-10 homolog (563 aa).

Thr433 is subject to Phosphothreonine. The tract at residues 544-563 (VSKEEDPGNENSEIISIDED) is disordered. Ser559 carries the post-translational modification Phosphoserine.

Belongs to the ataxin-10 family.

Its subcellular location is the cytoplasm. Functionally, may play a role in the regulation of cytokinesis. In Saccharomyces cerevisiae (strain ATCC 204508 / S288c) (Baker's yeast), this protein is Ataxin-10 homolog (CTR86).